The sequence spans 276 residues: Large ribosomal subunit protein uL2 (276 aa).

2 disordered regions span residues 1 to 58 and 218 to 276; these read MAIR…GGGH and RPIT…KNRK. A compositionally biased stretch (polar residues) spans 16–27; that stretch reads ASVSDFSDLTRS. Positions 255–276 are enriched in basic residues; the sequence is RRPKKASNKMIVRRRPNGKNRK.

This sequence belongs to the universal ribosomal protein uL2 family. Part of the 50S ribosomal subunit. Forms a bridge to the 30S subunit in the 70S ribosome.

Functionally, one of the primary rRNA binding proteins. Required for association of the 30S and 50S subunits to form the 70S ribosome, for tRNA binding and peptide bond formation. It has been suggested to have peptidyltransferase activity; this is somewhat controversial. Makes several contacts with the 16S rRNA in the 70S ribosome. The sequence is that of Large ribosomal subunit protein uL2 from Bifidobacterium animalis subsp. lactis (strain AD011).